A 230-amino-acid chain; its full sequence is Cytidylate kinase (230 aa).

11 to 19 (GPAAAGKST) lines the ATP pocket.

Belongs to the cytidylate kinase family. Type 1 subfamily.

The protein localises to the cytoplasm. It carries out the reaction CMP + ATP = CDP + ADP. The catalysed reaction is dCMP + ATP = dCDP + ADP. This is Cytidylate kinase from Oceanobacillus iheyensis (strain DSM 14371 / CIP 107618 / JCM 11309 / KCTC 3954 / HTE831).